The following is a 520-amino-acid chain: Beta-galactoside-specific lectin 4 (520 aa).

The N-linked (GlcNAc...) asparagine glycan is linked to Asn107. Residue Glu159 is part of the active site. Cys240 and Cys266 are disulfide-bonded. A propeptide spans 241 to 265 (GERPSSSDVRYWPLVIRPVIADDVT) (connecting peptide). The Ricin B-type lectin 1 domain occupies 269 to 396 (SEPTVRIVGR…YTLGQGWLAG (128 aa)). A D-galactose-binding site is contributed by 284-286 (DVR). N-linked (GlcNAc...) asparagine glycosylation is present at Asn322. Cysteines 325 and 342 form a disulfide. N-linked (GlcNAc...) asparagine glycans are attached at residues Asn357 and Asn397. The Ricin B-type lectin 2 domain maps to 400–520 (APREVTIYGF…KPNQMWLPVP (121 aa)). 2 disulfide bridges follow: Cys413–Cys426 and Cys451–Cys467. Position 494 to 496 (494 to 496 (DVA)) interacts with D-galactose.

Belongs to the ribosome-inactivating protein family. Type 2 RIP subfamily. As to quaternary structure, disulfide-linked dimer of A and B chains.

The enzyme catalyses Endohydrolysis of the N-glycosidic bond at one specific adenosine on the 28S rRNA.. In terms of biological role, the A chain is responsible for inhibiting protein synthesis through the catalytic inactivation of 60S ribosomal subunits by removing adenine from position 4,324 of 28S rRNA. The B chain binds to cell receptors and probably facilitates the entry into the cell of the A chain; B chains are also responsible for cell agglutination (lectin activity). Inhibits growth of the human tumor cell line Molt4. This is Beta-galactoside-specific lectin 4 from Viscum album (European mistletoe).